The following is a 316-amino-acid chain: Acetyl-coenzyme A carboxylase carboxyl transferase subunit beta (316 aa).

A CoA carboxyltransferase N-terminal domain is found at 39 to 308 (LWHKCSKCGV…PPHMVLWETM (270 aa)). Zn(2+)-binding residues include C43, C46, C62, and C65. A C4-type zinc finger spans residues 43-65 (CSKCGVLAYTKDLKANQMVCIEC).

The protein belongs to the AccD/PCCB family. As to quaternary structure, acetyl-CoA carboxylase is a heterohexamer composed of biotin carboxyl carrier protein (AccB), biotin carboxylase (AccC) and two subunits each of ACCase subunit alpha (AccA) and ACCase subunit beta (AccD). Zn(2+) is required as a cofactor.

It is found in the cytoplasm. The enzyme catalyses N(6)-carboxybiotinyl-L-lysyl-[protein] + acetyl-CoA = N(6)-biotinyl-L-lysyl-[protein] + malonyl-CoA. It functions in the pathway lipid metabolism; malonyl-CoA biosynthesis; malonyl-CoA from acetyl-CoA: step 1/1. Its function is as follows. Component of the acetyl coenzyme A carboxylase (ACC) complex. Biotin carboxylase (BC) catalyzes the carboxylation of biotin on its carrier protein (BCCP) and then the CO(2) group is transferred by the transcarboxylase to acetyl-CoA to form malonyl-CoA. The chain is Acetyl-coenzyme A carboxylase carboxyl transferase subunit beta from Nostoc punctiforme (strain ATCC 29133 / PCC 73102).